The chain runs to 430 residues: tRNA pseudouridine synthase Pus10 (430 aa).

The active-site Nucleophile is the Asp-253. 2 residues coordinate substrate: Tyr-320 and Tyr-392.

This sequence belongs to the pseudouridine synthase Pus10 family.

It carries out the reaction uridine(54) in tRNA = pseudouridine(54) in tRNA. The catalysed reaction is uridine(55) in tRNA = pseudouridine(55) in tRNA. In terms of biological role, responsible for synthesis of pseudouridine from uracil-54 and uracil-55 in the psi GC loop of transfer RNAs. The protein is tRNA pseudouridine synthase Pus10 of Ignisphaera aggregans (strain DSM 17230 / JCM 13409 / AQ1.S1).